The primary structure comprises 290 residues: Ribonuclease 3 (290 aa).

The RNase III domain occupies 20–145 (YSCFYRILGF…FIGAIYLDRG (126 aa)). Glutamate 62 lines the Mg(2+) pocket. Aspartate 66 is an active-site residue. Positions 131 and 134 each coordinate Mg(2+). Residue glutamate 134 is part of the active site. Residues 173–242 (NFKSKLIEWS…AQMTLKKIKG (70 aa)) form the DRBM domain. Positions 254-290 (KTQNNVPAEDTTPESETSLTAENQQIDEIISTEEISV) are disordered. Positions 267–279 (ESETSLTAENQQI) are enriched in polar residues.

Belongs to the ribonuclease III family. Homodimer. Mg(2+) is required as a cofactor.

It is found in the cytoplasm. It catalyses the reaction Endonucleolytic cleavage to 5'-phosphomonoester.. Functionally, digests double-stranded RNA. Involved in the processing of primary rRNA transcript to yield the immediate precursors to the large and small rRNAs (23S and 16S). Processes some mRNAs, and tRNAs when they are encoded in the rRNA operon. Processes pre-crRNA and tracrRNA of type II CRISPR loci if present in the organism. The chain is Ribonuclease 3 from Bacteroides fragilis (strain ATCC 25285 / DSM 2151 / CCUG 4856 / JCM 11019 / LMG 10263 / NCTC 9343 / Onslow / VPI 2553 / EN-2).